The chain runs to 609 residues: D-apionate lactonase (609 aa).

It carries out the reaction D-apionolactone + H2O = D-apionate + H(+). It participates in carbohydrate metabolism. Its function is as follows. Involved in catabolism of D-apiose. Hydrolyzes D-apionolactone to D-apionate. This Brucella anthropi (strain ATCC 49188 / DSM 6882 / CCUG 24695 / JCM 21032 / LMG 3331 / NBRC 15819 / NCTC 12168 / Alc 37) (Ochrobactrum anthropi) protein is D-apionate lactonase.